Reading from the N-terminus, the 722-residue chain is Serine/threonine-protein kinase dkf-1 (722 aa).

2 consecutive Phorbol-ester/DAG-type zinc fingers follow at residues 98-148 (PHVV…RNNC) and 186-236 (PHTL…ASNC). The region spanning 279–407 (KKLEGWMMHF…QFIKESLQPP (129 aa)) is the PH domain. Residues 426 to 685 (VLSDKTLGSG…IEQCLDHGWL (260 aa)) form the Protein kinase domain. ATP is bound by residues 432–440 (LGSGQFGTV) and lysine 455. The active-site Proton acceptor is the aspartate 551. Threonine 588 bears the Phosphothreonine mark.

It belongs to the protein kinase superfamily. CAMK Ser/Thr protein kinase family. PKD subfamily. Requires Mg(2+) as cofactor. Post-translationally, prolonged phosphorylation at Thr-588 results in ubiquitination and degradation. In terms of tissue distribution, highly expressed in embryos and at lower levels through the four larval stages in adults. Present in a region bounded by the anterior and posterior bulbs of the pharynx and an area of the tail containing the lumbar, dorsorectal and pre-anal ganglia. Expressed in neurons.

It is found in the cytoplasm. The protein localises to the membrane. It catalyses the reaction L-seryl-[protein] + ATP = O-phospho-L-seryl-[protein] + ADP + H(+). It carries out the reaction L-threonyl-[protein] + ATP = O-phospho-L-threonyl-[protein] + ADP + H(+). Activated by DAG and phorbol esters. Phorbol-ester/DAG-type domain 1 binds phorbol ester with high affinity and mediates accumulation at the cell periphery. Phorbol-ester/DAG-type domain 2 binds phorbol ester with low affinity but may mediate initial contact, resulting in a conformational change allowing previously occluded domain 1 to anchor the kinase. Phosphorylation on Thr-588 is then also required for activation and may also result in a further conformational change. Converts transient diacylglycerol (DAG) signals into prolonged physiological effects, independently of PKC. Role in the regulation of growth and neuromuscular control of movement. Involved in immune response to S.aureus bacterium by activating transcription factor hlh-30 downstream of phospholipase plc-1. The protein is Serine/threonine-protein kinase dkf-1 (dkf-1) of Caenorhabditis elegans.